A 621-amino-acid polypeptide reads, in one-letter code: Ubiquitin-like-specific protease 1 (621 aa).

Ser-2 is subject to N-acetylserine. Residues Ser-21 and Ser-25 each carry the phosphoserine modification. 2 disordered regions span residues 116–150 and 169–196; these read FDGS…ENYS and RRRI…SNCD. Low complexity predominate over residues 124–141; it reads SGNSDVESRSSGSRSSDV. Position 179 is a phosphothreonine (Thr-179). A compositionally biased stretch (polar residues) spans 179–196; sequence TPSTSPISSLASQKSNCD. Ser-264 is modified (phosphoserine). A protease region spans residues 432–621; it reads NIEITVRDFK…AHLILTDALK (190 aa). Residues His-514, Asp-531, and Cys-580 contribute to the active site.

It belongs to the peptidase C48 family.

The enzyme catalyses Hydrolysis of the alpha-linked peptide bond in the sequence Gly-Gly-|-Ala-Thr-Tyr at the C-terminal end of the small ubiquitin-like modifier (SUMO) propeptide, Smt3, leading to the mature form of the protein. A second reaction involves the cleavage of an epsilon-linked peptide bond between the C-terminal glycine of the mature SUMO and the lysine epsilon-amino group of the target protein.. Its function is as follows. Protease that catalyzes two essential functions in the SUMO pathway: processing of full-length SMT3 to its mature form and deconjugation of SMT3 from targeted proteins. Has an essential role in the G2/M phase of the cell cycle. This is Ubiquitin-like-specific protease 1 (ULP1) from Saccharomyces cerevisiae (strain ATCC 204508 / S288c) (Baker's yeast).